A 328-amino-acid polypeptide reads, in one-letter code: Diacetylchitobiose uptake system permease protein DasB (328 aa).

Positions 1–27 are disordered; the sequence is MTVQTERPPSGPSDVRKADGGGTGGTR. Helical transmembrane passes span 36 to 56, 104 to 124, 134 to 154, 188 to 208, 247 to 267, and 297 to 317; these read ALAP…LLGW, IIFT…IGLL, FVLM…ATTV, FSTF…FVAI, FLYA…VQVY, and MGAA…AYYL. In terms of domain architecture, ABC transmembrane type-1 spans 100–316; that stretch reads TVRSIIFTAV…LILLGLTAYY (217 aa).

It belongs to the binding-protein-dependent transport system permease family. The complex is composed of two ATP-binding proteins (MsiK), two transmembrane proteins (DasB and DasC) and a solute-binding protein (DasA).

The protein resides in the cell membrane. Part of the ABC transporter complex DasABC-MsiK involved in N,N'-diacetylchitobiose ((GlcNAc)2) uptake. Responsible for the translocation of the substrate across the membrane. This chain is Diacetylchitobiose uptake system permease protein DasB, found in Streptomyces coelicolor (strain ATCC BAA-471 / A3(2) / M145).